A 539-amino-acid chain; its full sequence is Phosphoenolpyruvate carboxykinase (ATP) (539 aa).

The substrate site is built by Arg64, Tyr206, and Lys212. Residues Lys212, His231, and 247–255 (GLSGTGKTT) contribute to the ATP site. 2 residues coordinate Mn(2+): Lys212 and His231. Asp268 is a binding site for Mn(2+). ATP contacts are provided by residues Glu296, Arg332, 448 to 449 (RI), and Thr454. Position 332 (Arg332) interacts with substrate.

Belongs to the phosphoenolpyruvate carboxykinase (ATP) family. Monomer. It depends on Mn(2+) as a cofactor.

The protein localises to the cytoplasm. The enzyme catalyses oxaloacetate + ATP = phosphoenolpyruvate + ADP + CO2. The protein operates within carbohydrate biosynthesis; gluconeogenesis. Its function is as follows. Involved in the gluconeogenesis. Catalyzes the conversion of oxaloacetate (OAA) to phosphoenolpyruvate (PEP) through direct phosphoryl transfer between the nucleoside triphosphate and OAA. In Edwardsiella ictaluri (strain 93-146), this protein is Phosphoenolpyruvate carboxykinase (ATP).